Consider the following 892-residue polypeptide: Alpha-actinin-1 (892 aa).

Met-1 is modified (N-acetylmethionine). The interval 1–247 (MDHYDSQQTN…IMTYVSSFYH (247 aa)) is actin-binding. Ser-6 bears the Phosphoserine mark. Tyr-12 is modified (phosphotyrosine; by FAK1). 2 Calponin-homology (CH) domains span residues 31-135 (KQQR…LRFA) and 144-250 (TSAK…HAFS). Residues Lys-95 and Lys-195 each carry the N6-acetyllysine modification. Spectrin repeat units lie at residues 274-384 (QLME…WLLN), 394-499 (HLAE…ALER), 509-620 (QLYL…ALTE), and 630-733 (RLRK…EVEN). Residues 274–733 (QLMEDYEKLA…IARTINEVEN (460 aa)) form an interaction with DDN region. Position 471 is a phosphoserine (Ser-471). An N6-acetyllysine modification is found at Lys-676. Phosphoserine is present on Ser-677. EF-hand domains follow at residues 746-781 (EQMN…LGYD) and 787-822 (QGEA…ETAD). Ca(2+) is bound by residues Asp-759, Asp-761, Ser-763, Thr-765, and Glu-770. Ser-890 bears the Phosphoserine mark.

Belongs to the alpha-actinin family. In terms of assembly, homodimer; antiparallel. Interacts with MYOZ2, TTID and LPP. Interacts with DDN. Interacts with PSD. Interacts with MICALL2. Interacts with DNM2 and CTTN. Interacts with PDLIM1. Interacts with PDLIM2. Interacts with PDLIM4 (via PDZ domain). Interacts with IGSF8.

The protein resides in the cytoplasm. It localises to the cytoskeleton. Its subcellular location is the myofibril. The protein localises to the sarcomere. It is found in the z line. The protein resides in the cell membrane. It localises to the cell junction. Its subcellular location is the cell projection. The protein localises to the ruffle. Functionally, F-actin cross-linking protein which is thought to anchor actin to a variety of intracellular structures. Association with IGSF8 regulates the immune synapse formation and is required for efficient T-cell activation. The sequence is that of Alpha-actinin-1 (Actn1) from Mus musculus (Mouse).